Reading from the N-terminus, the 477-residue chain is Diphthine methyltransferase (477 aa).

3 WD repeats span residues 194–232 (HFEAWIAAFNYWQTELVYSGGDDCLLRGWDTRMLGTPVF), 236–276 (RHCM…QPLA), and 422–464 (VKTR…ARTL).

The protein belongs to the DPH7 family. Interacts with INCA1.

It catalyses the reaction diphthine methyl ester-[translation elongation factor 2] + H2O = diphthine-[translation elongation factor 2] + methanol + H(+). The protein operates within protein modification; peptidyl-diphthamide biosynthesis. Functionally, catalyzes the demethylation of diphthine methyl ester to form diphthine, an intermediate diphthamide biosynthesis, a post-translational modification of histidine which occurs in translation elongation factor 2 (EEF2). The polypeptide is Diphthine methyltransferase (Dph7) (Mus musculus (Mouse)).